Here is a 388-residue protein sequence, read N- to C-terminus: Isocitrate dehydrogenase [NAD] subunit 1, mitochondrial (388 aa).

The N-terminal 35 residues, 1 to 35 (MFSLRTAQPAQSLFRAATNTYSTSLPRSAIAARSF), are a transit peptide targeting the mitochondrion. Substrate-binding residues include Arg137, Arg168, and Asp255. A Mg(2+)-binding site is contributed by Asp255.

This sequence belongs to the isocitrate and isopropylmalate dehydrogenases family. Octamer of two non-identical subunits IDH1 and IDH2. Mg(2+) is required as a cofactor. Mn(2+) serves as cofactor.

It is found in the mitochondrion. The enzyme catalyses D-threo-isocitrate + NAD(+) = 2-oxoglutarate + CO2 + NADH. In terms of biological role, performs an essential role in the oxidative function of the citric acid cycle. In Ajellomyces capsulatus (Darling's disease fungus), this protein is Isocitrate dehydrogenase [NAD] subunit 1, mitochondrial (IDH1).